The following is a 542-amino-acid chain: Coiled-coil domain-containing protein 60 (542 aa).

Residues 70–97 (TMLQEETAFKKHQQHLKKLQEEELNKFQ) adopt a coiled-coil conformation. Disordered stretches follow at residues 228–284 (ATRK…EEEV) and 334–358 (QTTH…TQKK). Low complexity-rich tracts occupy residues 245–261 (SGGS…NPSS) and 342–351 (RSSTTSGESH).

This Rattus norvegicus (Rat) protein is Coiled-coil domain-containing protein 60 (Ccdc60).